A 463-amino-acid chain; its full sequence is MALRLYDTLTKEKRDFAPLDPSRVRMYVCGPTVYDFAHIGNARPVIVFDVLFRLLRHLYGENHVKYVRNITDVDDKINDRAARDYPGLPLNESIRKVTEQTERQFHDDVDALGCLRPTVEPRATEHIGEMRTIIDRLVEGGFAYVADDHVLFSPGAMNAADSVLPRYGALANRSLDEMIAGARVDVAPYKRDATDFVLWKPSKPGEPSWPSPAGIATQGRPGWHIECSAMSWKHLGETFDIHGGGIDLVFPHHENEVAQSCCAFHTSRMAQTWMHNGFLQVEGEKMSKSLGNFVTIRELLATEKFGGRKWDGATLRLAMLKTHYRQPIDWTADALHEAEKAIFDWSDFTKDATPGSCDDVIAALTDDLNTPKMIAELHALRRAGKADELCGAMELLGISPVVRGTVDLDATAKSLIDARTAARARKDFKESDRIRDELAAMGIAIKDGKDSDGKPVTTWEIAR.

C29 serves as a coordination point for Zn(2+). A 'HIGH' region motif is present at residues 31 to 41 (PTVYDFAHIGN). Residues C227, H252, and E256 each contribute to the Zn(2+) site. Residues 285–289 (KMSKS) carry the 'KMSKS' region motif. K288 is an ATP binding site.

The protein belongs to the class-I aminoacyl-tRNA synthetase family. Monomer. It depends on Zn(2+) as a cofactor.

Its subcellular location is the cytoplasm. The catalysed reaction is tRNA(Cys) + L-cysteine + ATP = L-cysteinyl-tRNA(Cys) + AMP + diphosphate. The chain is Cysteine--tRNA ligase from Rhodopseudomonas palustris (strain BisB5).